Consider the following 180-residue polypeptide: Large ribosomal subunit protein uL5 (180 aa).

Belongs to the universal ribosomal protein uL5 family. Part of the 50S ribosomal subunit; part of the 5S rRNA/L5/L18/L25 subcomplex. Contacts the 5S rRNA and the P site tRNA. Forms a bridge to the 30S subunit in the 70S ribosome.

Functionally, this is one of the proteins that bind and probably mediate the attachment of the 5S RNA into the large ribosomal subunit, where it forms part of the central protuberance. In the 70S ribosome it contacts protein S13 of the 30S subunit (bridge B1b), connecting the 2 subunits; this bridge is implicated in subunit movement. Contacts the P site tRNA; the 5S rRNA and some of its associated proteins might help stabilize positioning of ribosome-bound tRNAs. The polypeptide is Large ribosomal subunit protein uL5 (Moorella thermoacetica (strain ATCC 39073 / JCM 9320)).